We begin with the raw amino-acid sequence, 672 residues long: Poly-beta-1,6-N-acetyl-D-glucosamine N-deacetylase (672 aa).

Residues 1-20 form the signal peptide; the sequence is MLRNGNKYLLMLVSIIMLTA. Residue Cys-21 is the site of N-palmitoyl cysteine attachment. Cys-21 is lipidated: S-diacylglycerol cysteine. The NodB homology domain maps to 107 to 349; it reads KAVVLTFDDG…IQRVKDMQIS (243 aa).

Belongs to the polysaccharide deacetylase family.

The protein resides in the cell outer membrane. Catalyzes the N-deacetylation of poly-beta-1,6-N-acetyl-D-glucosamine (PGA), a biofilm adhesin polysaccharide. N-deacetylation promotes PGA export through the PgaA porin. The sequence is that of Poly-beta-1,6-N-acetyl-D-glucosamine N-deacetylase (pgaB) from Escherichia coli O157:H7.